The following is a 396-amino-acid chain: L-lactate dehydrogenase (396 aa).

In terms of domain architecture, FMN hydroxy acid dehydrogenase spans 1-380 (MIISAASDYR…TQDSLVQVLG (380 aa)). Y24 contacts substrate. Residues S106 and Q127 each coordinate FMN. Y129 lines the substrate pocket. T155 serves as a coordination point for FMN. R164 lines the substrate pocket. K251 is an FMN binding site. The active-site Proton acceptor is H275. Position 278 (R278) interacts with substrate. 306 to 330 (DSGIRNGLDVVRMIALGADTVLLGR) is a binding site for FMN.

The protein belongs to the FMN-dependent alpha-hydroxy acid dehydrogenase family. Requires FMN as cofactor.

The protein resides in the cell inner membrane. It catalyses the reaction (S)-lactate + A = pyruvate + AH2. Catalyzes the conversion of L-lactate to pyruvate. Is coupled to the respiratory chain. This Escherichia coli O1:K1 / APEC protein is L-lactate dehydrogenase.